The primary structure comprises 152 residues: UPF0266 membrane protein Ent638_2389 (152 aa).

The next 3 helical transmembrane spans lie at I6 to M26, V45 to Q65, and A67 to I87.

It belongs to the UPF0266 family.

Its subcellular location is the cell inner membrane. The sequence is that of UPF0266 membrane protein Ent638_2389 from Enterobacter sp. (strain 638).